We begin with the raw amino-acid sequence, 426 residues long: Histidine--tRNA ligase (426 aa).

It belongs to the class-II aminoacyl-tRNA synthetase family. In terms of assembly, homodimer.

The protein resides in the cytoplasm. It carries out the reaction tRNA(His) + L-histidine + ATP = L-histidyl-tRNA(His) + AMP + diphosphate + H(+). The chain is Histidine--tRNA ligase from Microcystis aeruginosa (strain NIES-843 / IAM M-2473).